A 384-amino-acid polypeptide reads, in one-letter code: GDSL esterase/lipase ENOD8 (384 aa).

The signal sequence occupies residues 1 to 31 (MKFMAKIELSRHIPLVTLIVLVLCITPPIFA). The active-site Nucleophile is the S46. N-linked (GlcNAc...) asparagine glycans are attached at residues N105, N191, N198, N276, and N330. Active-site residues include D349 and H352.

The protein belongs to the 'GDSL' lipolytic enzyme family. As to expression, expressed in root nodules (at protein level).

Its subcellular location is the symbiosome. In terms of biological role, has lipase and esterase activities. Probably involved in root nodule physiology. The chain is GDSL esterase/lipase ENOD8 from Medicago truncatula (Barrel medic).